We begin with the raw amino-acid sequence, 210 residues long: Redox-sensing transcriptional repressor Rex (210 aa).

The segment at residues 17 to 56 is a DNA-binding region (H-T-H motif); it reads KYHRYLYELLKNDVDRISSKELSEKIGFTASQIRQDLNCF. NAD(+) is bound at residue 91–96; sequence GAGNIG.

It belongs to the transcriptional regulatory Rex family. As to quaternary structure, homodimer.

The protein localises to the cytoplasm. Its function is as follows. Modulates transcription in response to changes in cellular NADH/NAD(+) redox state. This Clostridium botulinum (strain Loch Maree / Type A3) protein is Redox-sensing transcriptional repressor Rex.